Here is a 562-residue protein sequence, read N- to C-terminus: F-box only protein 33 (562 aa).

Residues 68–114 form the F-box domain; that stretch reads AAGAASLPSELIVHIFSFLPAPDRLRASASCSHWRECLFYPALWPQL. Residues 155 to 173 show a composition bias toward gly residues; it reads GGGPGDGGSGGGTDTGTGG. The disordered stretch occupies residues 155-176; the sequence is GGGPGDGGSGGGTDTGTGGEDG.

As to quaternary structure, part of the SCF (SKP1-CUL1-F-box) E3 ubiquitin-protein ligase complex SCF(FBXO33) formed of CUL1, SKP1, RBX1 and FBXO33. Interacts via its N-terminus with YBX1 CSD domain. Directly interacts with SKP1 and CUL1.

It functions in the pathway protein modification; protein ubiquitination. In terms of biological role, substrate recognition component of a SCF (SKP1-CUL1-F-box protein) E3 ubiquitin-protein ligase complex which mediates the ubiquitination and subsequent proteasomal degradation of target proteins. Probably recognizes and binds to phosphorylated target proteins. Recognizes YBX1. This chain is F-box only protein 33 (Fbxo33), found in Mus musculus (Mouse).